The primary structure comprises 252 residues: Indole-3-glycerol phosphate synthase (252 aa).

The protein belongs to the TrpC family.

The catalysed reaction is 1-(2-carboxyphenylamino)-1-deoxy-D-ribulose 5-phosphate + H(+) = (1S,2R)-1-C-(indol-3-yl)glycerol 3-phosphate + CO2 + H2O. The protein operates within amino-acid biosynthesis; L-tryptophan biosynthesis; L-tryptophan from chorismate: step 4/5. The polypeptide is Indole-3-glycerol phosphate synthase (Bacillus licheniformis (strain ATCC 14580 / DSM 13 / JCM 2505 / CCUG 7422 / NBRC 12200 / NCIMB 9375 / NCTC 10341 / NRRL NRS-1264 / Gibson 46)).